We begin with the raw amino-acid sequence, 256 residues long: 5-keto-4-deoxy-D-glucarate aldolase (256 aa).

The Proton acceptor role is filled by His50. Gln151 contributes to the substrate binding site. Residue Glu153 coordinates Mg(2+). Residues Ser178 and Asp179 each coordinate substrate. Residue Asp179 participates in Mg(2+) binding.

Belongs to the HpcH/HpaI aldolase family. KDGluc aldolase subfamily. As to quaternary structure, homohexamer; trimer of dimers. Mg(2+) is required as a cofactor.

It catalyses the reaction 5-dehydro-4-deoxy-D-glucarate = 2-hydroxy-3-oxopropanoate + pyruvate. The enzyme catalyses 2-dehydro-3-deoxy-D-glucarate = 2-hydroxy-3-oxopropanoate + pyruvate. It participates in carbohydrate acid metabolism; galactarate degradation; D-glycerate from galactarate: step 2/3. In terms of biological role, catalyzes the reversible retro-aldol cleavage of both 5-keto-4-deoxy-D-glucarate and 2-keto-3-deoxy-D-glucarate to pyruvate and tartronic semialdehyde. This is 5-keto-4-deoxy-D-glucarate aldolase from Enterobacter sp. (strain 638).